The primary structure comprises 96 residues: uncharacterized protein (96 aa).

3 helical membrane passes run 3-23 (KLTI…QLFA), 30-50 (TLGN…LASI), and 68-88 (IGLL…IIII).

The protein resides in the cell membrane. This is an uncharacterized protein from Bacillus subtilis (strain 168).